The primary structure comprises 192 residues: Probable metallophosphoesterase MJ0623 (192 aa).

The a divalent metal cation site is built by Asp-41, His-43, Asp-70, Asn-92, His-115, His-144, and His-146.

The protein belongs to the metallophosphoesterase superfamily. YfcE family. It depends on a divalent metal cation as a cofactor.

The polypeptide is Probable metallophosphoesterase MJ0623 (Methanocaldococcus jannaschii (strain ATCC 43067 / DSM 2661 / JAL-1 / JCM 10045 / NBRC 100440) (Methanococcus jannaschii)).